The chain runs to 447 residues: Methylenetetrahydrofolate--tRNA-(uracil-5-)-methyltransferase TrmFO (447 aa).

An FAD-binding site is contributed by G8–G13. The tract at residues N398 to R421 is disordered. Basic and acidic residues predominate over residues P406–Q417.

The protein belongs to the MnmG family. TrmFO subfamily. The cofactor is FAD.

Its subcellular location is the cytoplasm. The catalysed reaction is uridine(54) in tRNA + (6R)-5,10-methylene-5,6,7,8-tetrahydrofolate + NADH + H(+) = 5-methyluridine(54) in tRNA + (6S)-5,6,7,8-tetrahydrofolate + NAD(+). It carries out the reaction uridine(54) in tRNA + (6R)-5,10-methylene-5,6,7,8-tetrahydrofolate + NADPH + H(+) = 5-methyluridine(54) in tRNA + (6S)-5,6,7,8-tetrahydrofolate + NADP(+). Its function is as follows. Catalyzes the folate-dependent formation of 5-methyl-uridine at position 54 (M-5-U54) in all tRNAs. The chain is Methylenetetrahydrofolate--tRNA-(uracil-5-)-methyltransferase TrmFO from Rubrobacter xylanophilus (strain DSM 9941 / JCM 11954 / NBRC 16129 / PRD-1).